We begin with the raw amino-acid sequence, 355 residues long: Putative inositol monophosphatase 3 (355 aa).

Residues 16–36 form a helical membrane-spanning segment; that stretch reads VPATIFAILLTIVLVYFLNFH. 5 residues coordinate Mg(2+): E127, D167, L169, D170, and D292. E127 contributes to the substrate binding site. Residues 169–172 and D292 contribute to the substrate site; that span reads LDAT.

This sequence belongs to the inositol monophosphatase superfamily. Mg(2+) serves as cofactor.

Its subcellular location is the membrane. The catalysed reaction is a myo-inositol phosphate + H2O = myo-inositol + phosphate. Its pathway is polyol metabolism; myo-inositol biosynthesis; myo-inositol from D-glucose 6-phosphate: step 2/2. This Drosophila pseudoobscura pseudoobscura (Fruit fly) protein is Putative inositol monophosphatase 3.